The following is a 199-amino-acid chain: Glycerol-3-phosphate acyltransferase (199 aa).

5 helical membrane-spanning segments follow: residues 5-25 (VLTI…SAVL), 56-76 (SAAL…YLAF), 83-103 (IALG…IFFG), 118-138 (APIG…LVLV), and 141-161 (YSSF…WWLD).

This sequence belongs to the PlsY family. Probably interacts with PlsX.

The protein localises to the cell inner membrane. The catalysed reaction is an acyl phosphate + sn-glycerol 3-phosphate = a 1-acyl-sn-glycero-3-phosphate + phosphate. It participates in lipid metabolism; phospholipid metabolism. Its function is as follows. Catalyzes the transfer of an acyl group from acyl-phosphate (acyl-PO(4)) to glycerol-3-phosphate (G3P) to form lysophosphatidic acid (LPA). This enzyme utilizes acyl-phosphate as fatty acyl donor, but not acyl-CoA or acyl-ACP. This is Glycerol-3-phosphate acyltransferase from Shewanella halifaxensis (strain HAW-EB4).